We begin with the raw amino-acid sequence, 234 residues long: Cyclo(L-leucyl-L-leucyl) synthase (234 aa).

The active-site Nucleophile is the Ser28. Substrate contacts are provided by residues 171 to 175 (YVLAE), Tyr195, and 200 to 201 (EL).

The protein belongs to the CDPS family.

The catalysed reaction is 2 L-leucyl-tRNA(Leu) = cyclo(L-leucyl-L-leucyl) + 2 tRNA(Leu) + 2 H(+). Its function is as follows. It uses activated amino acids in the form of aminoacyl-tRNAs (aa-tRNAs) as substrates to catalyze the ATP-independent formation of cyclodipeptides which are intermediates in diketopiperazine (DKP) biosynthetic pathways. Catalyzes the formation of cyclo(L-Leu-L-Leu) (cLL) from L-leucyl-tRNA(Leu). Can incorporate various nonpolar residues, such as L-phenylalanine, L-leucine and L-methionine, into cyclodipeptides. The sequence is that of Cyclo(L-leucyl-L-leucyl) synthase from Staphylococcus haemolyticus (strain JCSC1435).